The sequence spans 159 residues: Protein Smg homolog (159 aa).

The protein belongs to the Smg family.

The chain is Protein Smg homolog from Shewanella amazonensis (strain ATCC BAA-1098 / SB2B).